Consider the following 793-residue polypeptide: Phenylalanine--tRNA ligase beta subunit (793 aa).

One can recognise a tRNA-binding domain in the interval 39–148 (AGQFTHVIVA…DEAPIGMDLR (110 aa)). In terms of domain architecture, B5 spans 401–477 (PGTVSFLFDT…RLYGYDKLQA (77 aa)). Residues Asp-455, Asp-461, Glu-464, and Glu-465 each coordinate Mg(2+). Residues 698-792 (SKYPQIRRDL…LENEFSILLR (95 aa)) enclose the FDX-ACB domain.

It belongs to the phenylalanyl-tRNA synthetase beta subunit family. Type 1 subfamily. Tetramer of two alpha and two beta subunits. It depends on Mg(2+) as a cofactor.

The protein localises to the cytoplasm. The enzyme catalyses tRNA(Phe) + L-phenylalanine + ATP = L-phenylalanyl-tRNA(Phe) + AMP + diphosphate + H(+). This is Phenylalanine--tRNA ligase beta subunit from Legionella pneumophila (strain Lens).